Reading from the N-terminus, the 537-residue chain is Putative cysteine ligase BshC (537 aa).

Residues 415–439 (EKASNNFINEVEEMKIQQQELYNNL) adopt a coiled-coil conformation.

It belongs to the BshC family.

Involved in bacillithiol (BSH) biosynthesis. May catalyze the last step of the pathway, the addition of cysteine to glucosamine malate (GlcN-Mal) to generate BSH. This is Putative cysteine ligase BshC from Staphylococcus epidermidis (strain ATCC 12228 / FDA PCI 1200).